Here is a 210-residue protein sequence, read N- to C-terminus: Dynactin-associated protein (210 aa).

Topologically, residues 1 to 113 (MVADIKGNEQ…YCRNDWSMWK (113 aa)) are cytoplasmic. The chain crosses the membrane as a helical; Signal-anchor for type II membrane protein span at residues 114–134 (VFLACLLACVIMTAIGVLIIC). Residues 135–210 (LVNNKGSANS…PITVAPTDHL (76 aa)) lie on the Extracellular side of the membrane. Residues 168–210 (ACPPTMTTTSTVPASTATESTTSTATAATTSTEPITVAPTDHL) are disordered. A compositionally biased stretch (low complexity) spans 171-203 (PTMTTTSTVPASTATESTTSTATAATTSTEPIT).

In terms of assembly, interacts with DCTN1 and DCTN2. In terms of tissue distribution, expressed in fibroblast and numerous cancer cell lines (at protein level).

The protein resides in the golgi apparatus membrane. It localises to the cell membrane. Plays a role in the regulation of cell proliferation. Promotes activation of the AKT1 signaling pathway. Promotes phosphorylation of AKT1 at 'Ser-473'. The sequence is that of Dynactin-associated protein (DYNAP) from Homo sapiens (Human).